The primary structure comprises 330 residues: DNA-directed RNA polymerase subunit alpha (330 aa).

The segment at 1-236 (MQGSVTEFLK…EQLDAFVDLR (236 aa)) is alpha N-terminal domain (alpha-NTD). The segment at 250-330 (FDPILLRPVD…NWPPASIAED (81 aa)) is alpha C-terminal domain (alpha-CTD).

It belongs to the RNA polymerase alpha chain family. Homodimer. The RNAP catalytic core consists of 2 alpha, 1 beta, 1 beta' and 1 omega subunit. When a sigma factor is associated with the core the holoenzyme is formed, which can initiate transcription.

The catalysed reaction is RNA(n) + a ribonucleoside 5'-triphosphate = RNA(n+1) + diphosphate. DNA-dependent RNA polymerase catalyzes the transcription of DNA into RNA using the four ribonucleoside triphosphates as substrates. This chain is DNA-directed RNA polymerase subunit alpha, found in Vibrio campbellii (strain ATCC BAA-1116).